The chain runs to 438 residues: Methylenetetrahydrofolate--tRNA-(uracil-5-)-methyltransferase TrmFO 2 (438 aa).

Residue 9 to 14 (GAGLAG) participates in FAD binding.

Belongs to the MnmG family. TrmFO subfamily. Requires FAD as cofactor.

It localises to the cytoplasm. It catalyses the reaction uridine(54) in tRNA + (6R)-5,10-methylene-5,6,7,8-tetrahydrofolate + NADH + H(+) = 5-methyluridine(54) in tRNA + (6S)-5,6,7,8-tetrahydrofolate + NAD(+). The catalysed reaction is uridine(54) in tRNA + (6R)-5,10-methylene-5,6,7,8-tetrahydrofolate + NADPH + H(+) = 5-methyluridine(54) in tRNA + (6S)-5,6,7,8-tetrahydrofolate + NADP(+). Functionally, catalyzes the folate-dependent formation of 5-methyl-uridine at position 54 (M-5-U54) in all tRNAs. The polypeptide is Methylenetetrahydrofolate--tRNA-(uracil-5-)-methyltransferase TrmFO 2 (Mycoplasma mycoides subsp. mycoides SC (strain CCUG 32753 / NCTC 10114 / PG1)).